The primary structure comprises 265 residues: MARGLKKHLKRLNAPKHWMLDKLGGAFAPKPSSGPHKSRECLPLILIIRNRLKYALTYREVISILMQRHVLVDGKVRTDKTYPAGFMDVISIPKTNENYRLLYDTKGRFRLHPIRDEDAKFKLCKVRSVQFGQKGIPYLNTYDGRTIRYPDPLIKANDTIKIDLETNKIVDFIKFDVGNVVMVTGGRNTGRVGVIKNREKHKGSFETIHVEDSLGHQFATRMGNVFTIGKGNKPWVSLPKGKGIKLSIIEEQRKRDAAAQAAANA.

Positions 42–104 (LPLILIIRNR…TNENYRLLYD (63 aa)) constitute an S4 RNA-binding domain.

This sequence belongs to the eukaryotic ribosomal protein eS4 family.

Its subcellular location is the cytoplasm. The protein is Small ribosomal subunit protein eS4 (RPS4) of Zea mays (Maize).